Here is an 864-residue protein sequence, read N- to C-terminus: Leucine--tRNA ligase (864 aa).

A 'HIGH' region motif is present at residues 42 to 52 (PYPSGKLHMGH). The short motif at 619–623 (KMSKS) is the 'KMSKS' region element. Position 622 (K622) interacts with ATP.

This sequence belongs to the class-I aminoacyl-tRNA synthetase family.

The protein resides in the cytoplasm. It carries out the reaction tRNA(Leu) + L-leucine + ATP = L-leucyl-tRNA(Leu) + AMP + diphosphate. This Wigglesworthia glossinidia brevipalpis protein is Leucine--tRNA ligase.